The primary structure comprises 321 residues: MTAWLLPENVEDVLPPQAWRLEAMRRALLDLFRERGYQLVIPPLIEYVESLLTGVGADLDLKTFKLVDQLSGRLMAVRADITPQVARIDAHLLGANAINRLCYTGSVLHTQSDGFHRSREPIQIGAEVYGDAGIEADLEILSLMLQGLAACGVEGVQLDVGHVGVYRALAQEAGFDNATEHELFCALQAKDASAVDVLTAGLPMALRDAFAALPQLYGGREVLAEARARLPHLPAVAAALDTLVSLDQALGGVELAYDLAELRGYGYHSGVVFAAYTRGRSHAIAQGGRYDEVGRVFGRARPATGFSMDLRELVVAGSASE.

Belongs to the class-II aminoacyl-tRNA synthetase family. HisZ subfamily. In terms of assembly, heteromultimer composed of HisG and HisZ subunits.

The protein localises to the cytoplasm. The protein operates within amino-acid biosynthesis; L-histidine biosynthesis; L-histidine from 5-phospho-alpha-D-ribose 1-diphosphate: step 1/9. Functionally, required for the first step of histidine biosynthesis. May allow the feedback regulation of ATP phosphoribosyltransferase activity by histidine. This chain is ATP phosphoribosyltransferase regulatory subunit, found in Thiobacillus denitrificans (strain ATCC 25259 / T1).